The chain runs to 366 residues: Anhydro-N-acetylmuramic acid kinase (366 aa).

Residue 10-17 participates in ATP binding; it reads GTSMDGID.

This sequence belongs to the anhydro-N-acetylmuramic acid kinase family.

It catalyses the reaction 1,6-anhydro-N-acetyl-beta-muramate + ATP + H2O = N-acetyl-D-muramate 6-phosphate + ADP + H(+). It participates in amino-sugar metabolism; 1,6-anhydro-N-acetylmuramate degradation. Its pathway is cell wall biogenesis; peptidoglycan recycling. Catalyzes the specific phosphorylation of 1,6-anhydro-N-acetylmuramic acid (anhMurNAc) with the simultaneous cleavage of the 1,6-anhydro ring, generating MurNAc-6-P. Is required for the utilization of anhMurNAc either imported from the medium or derived from its own cell wall murein, and thus plays a role in cell wall recycling. The sequence is that of Anhydro-N-acetylmuramic acid kinase from Legionella pneumophila (strain Lens).